Here is a 445-residue protein sequence, read N- to C-terminus: Phosphoglucosamine mutase (445 aa).

Serine 102 acts as the Phosphoserine intermediate in catalysis. Residues serine 102, aspartate 241, aspartate 243, and aspartate 245 each coordinate Mg(2+). Serine 102 bears the Phosphoserine mark.

This sequence belongs to the phosphohexose mutase family. The cofactor is Mg(2+). In terms of processing, activated by phosphorylation.

The enzyme catalyses alpha-D-glucosamine 1-phosphate = D-glucosamine 6-phosphate. Its function is as follows. Catalyzes the conversion of glucosamine-6-phosphate to glucosamine-1-phosphate. In Escherichia coli O157:H7, this protein is Phosphoglucosamine mutase.